The sequence spans 344 residues: MLTDRQLLILQVIIDDFIRSGQPVGSRTLSKKHEIALSSATIRNEMADLEELGYIEKTHVSSGRVPSEKGYRYYVDHLLSPQRLTQEDIQKIKSIFAERIYELEKVVQKSAQILSDLTNYTSIALGPAVKENKLKRIQIIPLNQQTAVAIIVTDTGHVENHVITVPASVNPSDLEKMVNILNERLIGVPLVDLKDKIYKEVADVLRTHIHNYDSMLKTIVDTLDIPQEEKMFFAGTTNMLNQPEFSDIQKVRSLMKMIEQEKDFYRLLRKHNRKGIQVTIGRENQLSGMENCSLITATYSIGNEQLGTIAILGPTRMEYSRVITILNRVASDLSTALTKWYQNN.

The protein belongs to the HrcA family.

In terms of biological role, negative regulator of class I heat shock genes (grpE-dnaK-dnaJ and groELS operons). Prevents heat-shock induction of these operons. The chain is Heat-inducible transcription repressor HrcA from Geobacillus sp. (strain WCH70).